We begin with the raw amino-acid sequence, 400 residues long: Argininosuccinate synthase (400 aa).

Residue 9–17 coordinates ATP; sequence AYSGGLDTS. Residue tyrosine 87 participates in L-citrulline binding. ATP is bound at residue glycine 117. L-aspartate contacts are provided by threonine 119, asparagine 123, and aspartate 124. Asparagine 123 serves as a coordination point for L-citrulline. L-citrulline is bound by residues arginine 127, serine 176, serine 185, glutamate 261, and tyrosine 273.

It belongs to the argininosuccinate synthase family. Type 1 subfamily. As to quaternary structure, homotetramer.

It is found in the cytoplasm. It catalyses the reaction L-citrulline + L-aspartate + ATP = 2-(N(omega)-L-arginino)succinate + AMP + diphosphate + H(+). Its pathway is amino-acid biosynthesis; L-arginine biosynthesis; L-arginine from L-ornithine and carbamoyl phosphate: step 2/3. This is Argininosuccinate synthase from Chlorobium limicola (strain DSM 245 / NBRC 103803 / 6330).